A 411-amino-acid polypeptide reads, in one-letter code: Gamma-glutamyl phosphate reductase (411 aa).

The protein belongs to the gamma-glutamyl phosphate reductase family.

It is found in the cytoplasm. The enzyme catalyses L-glutamate 5-semialdehyde + phosphate + NADP(+) = L-glutamyl 5-phosphate + NADPH + H(+). It participates in amino-acid biosynthesis; L-proline biosynthesis; L-glutamate 5-semialdehyde from L-glutamate: step 2/2. Catalyzes the NADPH-dependent reduction of L-glutamate 5-phosphate into L-glutamate 5-semialdehyde and phosphate. The product spontaneously undergoes cyclization to form 1-pyrroline-5-carboxylate. This chain is Gamma-glutamyl phosphate reductase, found in Wolinella succinogenes (strain ATCC 29543 / DSM 1740 / CCUG 13145 / JCM 31913 / LMG 7466 / NCTC 11488 / FDC 602W) (Vibrio succinogenes).